Reading from the N-terminus, the 468-residue chain is Lactate utilization protein B (468 aa).

2 consecutive 4Fe-4S ferredoxin-type domains span residues 303–333 (GTQF…GHAY) and 352–381 (YENY…LHEL). Cys-312, Cys-315, Cys-318, Cys-322, Cys-365, Cys-368, and Cys-372 together coordinate [4Fe-4S] cluster. The disordered stretch occupies residues 442–468 (PAWTDSKDLPQPNKQTVRDWFKKRGNA). The segment covering 457 to 468 (TVRDWFKKRGNA) has biased composition (basic and acidic residues).

Belongs to the LutB/YkgF family.

Is involved in L-lactate degradation and allows cells to grow with lactate as the sole carbon source. Has probably a role as an electron transporter during oxidation of L-lactate. This Exiguobacterium sp. (strain ATCC BAA-1283 / AT1b) protein is Lactate utilization protein B.